Consider the following 859-residue polypeptide: Replication origin-binding protein (859 aa).

A Helicase ATP-binding domain is found at 70–235 (PLAADARRVT…AALRGAGSVH (166 aa)). Residue 83–90 (APMGSGKT) participates in ATP binding.

The protein belongs to the herpesviridae OriBP family. As to quaternary structure, homodimer. Interacts with the major DNA-binding protein. Interacts with the helicase/primase component UL8 and the polymerase accessory protein.

Its subcellular location is the host nucleus. Its function is as follows. Functions as a docking protein to recruit essential components of the viral replication machinery to viral DNA origins. In the presence of the major DNA-binding protein, opens dsDNA leading to a conformational change in the origin that facilitates DNA unwinding and subsequent replication. This Bovine herpesvirus 1.1 (strain Cooper) (BoHV-1) protein is Replication origin-binding protein (UL9).